The following is a 180-amino-acid chain: Secreted RxLR effector protein 5 (180 aa).

Residues 1–24 (MRFYYTLLATAAALLVHSDALSAA) form the signal peptide. A RxLR-dEER motif is present at residues 44–60 (RFLRRHTDSETTDNEER).

It belongs to the RxLR effector family.

The protein localises to the secreted. Its subcellular location is the host cell. Secreted effector that partially suppresses elicitor-induced cell death in host and enhances virulence of P.parasitica. The sequence is that of Secreted RxLR effector protein 5 from Phytophthora nicotianae (Potato buckeye rot agent).